The primary structure comprises 54 residues: uncharacterized protein (54 aa).

This is an uncharacterized protein from Rhizobium etli.